Reading from the N-terminus, the 303-residue chain is D-alanyl-D-alanine carboxypeptidase (303 aa).

A helical transmembrane segment spans residues 7 to 23 (LLLLLFLIYLGYDYVNE). Residues 37 to 56 (DQNPKEHLENSGTSENTQEK) form a disordered region. Substrate is bound by residues 154-156 (YAL) and serine 161. Residues histidine 163 and aspartate 170 each coordinate Zn(2+). The Proton donor/acceptor role is filled by glutamate 213. Position 216 (histidine 216) interacts with Zn(2+).

This sequence belongs to the peptidase M15B family. Zn(2+) is required as a cofactor.

Its subcellular location is the cell membrane. The DD-carboxypeptidase activity is not inhibited by beta-lactam antibiotics. Cleaves the C-terminal D-alanine residue of UDP-muramyl-pentapeptide (UDP-MurNAc-L-Ala-D-Glu-mDAP-D-Ala-D-Ala) or diacetyl-L-Lys-D-Ala-D-Ala. However the physiological substrate likely contains L-Lys instead of mDAP at the third position of the pentapeptide. Also releases the C-terminal D-lactate from UDP-MurNAc-L-Ala-D-Glu-mDAP-D-Ala-D-lactate, a depsipeptide produced by the vancomycin resistance protein VanA. Therefore, VanY should contribute in vivo to the hydrolysis of both the D-alanyl-D-alanine- and the depsipeptide-containing peptidoglycan precursors. Is not necessary for vancomycin resistance of E.faecium BM4147 and perhaps not W14-9. Does not display transpeptidase or beta-lactamase activities. This is D-alanyl-D-alanine carboxypeptidase from Enterococcus faecium (Streptococcus faecium).